A 948-amino-acid polypeptide reads, in one-letter code: Bifunctional glutamine synthetase adenylyltransferase/adenylyl-removing enzyme (948 aa).

Residues 1–444 are adenylyl removase; that stretch reads MSLPSALLPT…VFATLIGEED (444 aa). Positions 452–948 are adenylyl transferase; it reads ARHFHELWDM…VIQAWQQWLG (497 aa).

It belongs to the GlnE family. Mg(2+) serves as cofactor.

It carries out the reaction [glutamine synthetase]-O(4)-(5'-adenylyl)-L-tyrosine + phosphate = [glutamine synthetase]-L-tyrosine + ADP. The catalysed reaction is [glutamine synthetase]-L-tyrosine + ATP = [glutamine synthetase]-O(4)-(5'-adenylyl)-L-tyrosine + diphosphate. In terms of biological role, involved in the regulation of glutamine synthetase GlnA, a key enzyme in the process to assimilate ammonia. When cellular nitrogen levels are high, the C-terminal adenylyl transferase (AT) inactivates GlnA by covalent transfer of an adenylyl group from ATP to specific tyrosine residue of GlnA, thus reducing its activity. Conversely, when nitrogen levels are low, the N-terminal adenylyl removase (AR) activates GlnA by removing the adenylyl group by phosphorolysis, increasing its activity. The regulatory region of GlnE binds the signal transduction protein PII (GlnB) which indicates the nitrogen status of the cell. This chain is Bifunctional glutamine synthetase adenylyltransferase/adenylyl-removing enzyme, found in Vibrio cholerae serotype O1 (strain ATCC 39315 / El Tor Inaba N16961).